The primary structure comprises 338 residues: Anthranilate phosphoribosyltransferase (338 aa).

Residues glycine 78, 81–82 (GD), serine 86, 88–91 (NIST), 106–114 (KHGNRSITS), and serine 118 each bind 5-phospho-alpha-D-ribose 1-diphosphate. Glycine 78 is an anthranilate binding site. Serine 90 is a binding site for Mg(2+). Asparagine 109 lines the anthranilate pocket. Arginine 163 contributes to the anthranilate binding site. Aspartate 222 and glutamate 223 together coordinate Mg(2+).

The protein belongs to the anthranilate phosphoribosyltransferase family. Homodimer. Mg(2+) serves as cofactor.

It catalyses the reaction N-(5-phospho-beta-D-ribosyl)anthranilate + diphosphate = 5-phospho-alpha-D-ribose 1-diphosphate + anthranilate. It functions in the pathway amino-acid biosynthesis; L-tryptophan biosynthesis; L-tryptophan from chorismate: step 2/5. Its function is as follows. Catalyzes the transfer of the phosphoribosyl group of 5-phosphorylribose-1-pyrophosphate (PRPP) to anthranilate to yield N-(5'-phosphoribosyl)-anthranilate (PRA). The protein is Anthranilate phosphoribosyltransferase of Staphylococcus haemolyticus (strain JCSC1435).